Consider the following 591-residue polypeptide: MEGKWLLCLLLVLGTAAIQAHDGHDDDMIDIEDDLDDVIEEVEDSKSKSDTSTPPSPKVTYKAPVPTGEVYFADSFDRGSLSGWILSKAKKDDTDDEIAKYDGKWEVDEMKETKLPGDKGLVLMSRAKHHAISAKLNKPFLFDTKPLIVQYEVNFQNGIECGGAYVKLLSKTSELNLDQFHDKTPYTIMFGPDKCGEDYKLHFIFRHKNPKTGVYEEKHAKRPDADLKTYFTDKKTHLYTLILNPDNSFEILVDQSVVNSGNLLNDMTPPVNPSREIEDPEDRKPEDWDERPKIADPDAVKPDDWDEDAPSKIPDEEATKPEGWLDDEPEYIPDPDAEKPEDWDEDMDGEWEAPQIANPKCESAPGCGVWQRPMIDNPNYKGKWKPPMIDNPNYQGIWKPRKIPNPDFFEDLEPFRMTPFSAIGLELWSMTSDIFFDNFIISGDRRVVDDWANDGWGLKKAADGAAEPGVVGQMLEAAEERPWLWVVYILTVALPVFLVILFCCSGKKQSNAMEYKKTDAPQPDVKDEEGKEEEKNKGDEEEEEEKLEEKQKSDAEEDGGTGSQDEEDSKPKAEEDEILNRSPRNRKPRRE.

The N-terminal stretch at 1 to 20 is a signal peptide; the sequence is MEGKWLLCLLLVLGTAAIQA. At 21 to 482 the chain is on the lumenal side; sequence HDGHDDDMID…QMLEAAEERP (462 aa). Residues S75 and D118 each contribute to the Ca(2+) site. K138 bears the N6-acetyllysine mark. A disulfide bridge links C161 with C195. An alpha-D-glucoside-binding residues include Y165, K167, Y186, and D193. Residues 261–347 form a disordered region; sequence GNLLNDMTPP…EKPEDWDEDM (87 aa). Residues 275–320 are compositionally biased toward basic and acidic residues; it reads REIEDPEDRKPEDWDERPKIADPDAVKPDDWDEDAPSKIPDEEATK. The segment at 277-410 is p domain (Extended arm); that stretch reads IEDPEDRKPE…RKIPNPDFFE (134 aa). Repeat copies occupy residues 279-291, 296-308, 315-327, 334-346, and 349-359. 4 X approximate repeats stretches follow at residues 279-346 and 349-406; these read DPED…WDED and GEWE…IPNP. Residues 324–347 show a composition bias toward acidic residues; the sequence is WLDDEPEYIPDPDAEKPEDWDEDM. Positions 327-360 are interaction with PPIB; sequence DEPEYIPDPDAEKPEDWDEDMDGEWEAPQIANPK. A disulfide bridge connects residues C361 and C367. 3 consecutive repeat copies span residues 368–378, 382–392, and 396–406. E426 contributes to the an alpha-D-glucoside binding site. D437 is a binding site for Ca(2+). A helical membrane pass occupies residues 483–503; sequence WLWVVYILTVALPVFLVILFC. 2 S-palmitoyl cysteine lipidation sites follow: C503 and C504. Topologically, residues 504–591 are cytoplasmic; it reads CSGKKQSNAM…SPRNRKPRRE (88 aa). The segment at 504 to 591 is sufficient to mediate interaction with SGIP1; it reads CSGKKQSNAM…SPRNRKPRRE (88 aa). A compositionally biased stretch (basic and acidic residues) spans 514–538; it reads EYKKTDAPQPDVKDEEGKEEEKNKG. The interval 514 to 591 is disordered; that stretch reads EYKKTDAPQP…SPRNRKPRRE (78 aa). S553 bears the Phosphoserine mark. The span at 555-568 shows a compositional bias: acidic residues; sequence AEEDGGTGSQDEED. The residue at position 561 (T561) is a Phosphothreonine. S563 is modified (phosphoserine; by MAPK3). The residue at position 582 (S582) is a Phosphoserine.

It belongs to the calreticulin family. In terms of assembly, interacts with MAPK3/ERK1. Interacts with KCNH2. Associates with ribosomes. Interacts with SGIP1; involved in negative regulation of endocytosis. The palmitoylated form interacts with the ribosome-translocon complex component SSR1, promoting efficient folding of glycoproteins. Interacts with SERPINA2P/SERPINA2 and with the S and Z variants of SERPINA1. Interacts with PPIB. Interacts with ZNRF4. Interacts with SMIM22. Interacts with TMX2. Interacts with TMEM35A/NACHO and CHRNA7. Interacts with reticulophagy regulators RETREG2 and RETREG3. Interacts with DNM1L; may form part of a larger protein complex at the ER-mitochondrial interface during mitochondrial fission. Interacts with ADAM7. In terms of processing, phosphorylated at Ser-563 by MAPK3/ERK1. Phosphorylation by MAPK3/ERK1 increases its association with ribosomes. Post-translationally, palmitoylation by DHHC6 leads to the preferential localization to the perinuclear rough ER. It mediates the association of calnexin with the ribosome-translocon complex (RTC) which is required for efficient folding of glycosylated proteins. Ubiquitinated, leading to proteasomal degradation. Probably ubiquitinated by ZNRF4.

Its subcellular location is the endoplasmic reticulum membrane. It localises to the mitochondrion membrane. The protein localises to the melanosome membrane. In terms of biological role, calcium-binding protein that interacts with newly synthesized monoglucosylated glycoproteins in the endoplasmic reticulum. It may act in assisting protein assembly and/or in the retention within the ER of unassembled protein subunits. It seems to play a major role in the quality control apparatus of the ER by the retention of incorrectly folded proteins. Associated with partial T-cell antigen receptor complexes that escape the ER of immature thymocytes, it may function as a signaling complex regulating thymocyte maturation. Additionally it may play a role in receptor-mediated endocytosis at the synapse. The sequence is that of Calnexin (Canx) from Rattus norvegicus (Rat).